A 333-amino-acid polypeptide reads, in one-letter code: Acetyl-coenzyme A carboxylase carboxyl transferase subunit alpha (333 aa).

The region spanning 48 to 308 (LLEQKVDALR…KEMLVEELRD (261 aa)) is the CoA carboxyltransferase C-terminal domain.

This sequence belongs to the AccA family. As to quaternary structure, acetyl-CoA carboxylase is a heterohexamer composed of biotin carboxyl carrier protein (AccB), biotin carboxylase (AccC) and two subunits each of ACCase subunit alpha (AccA) and ACCase subunit beta (AccD).

The protein resides in the cytoplasm. It catalyses the reaction N(6)-carboxybiotinyl-L-lysyl-[protein] + acetyl-CoA = N(6)-biotinyl-L-lysyl-[protein] + malonyl-CoA. The protein operates within lipid metabolism; malonyl-CoA biosynthesis; malonyl-CoA from acetyl-CoA: step 1/1. Component of the acetyl coenzyme A carboxylase (ACC) complex. First, biotin carboxylase catalyzes the carboxylation of biotin on its carrier protein (BCCP) and then the CO(2) group is transferred by the carboxyltransferase to acetyl-CoA to form malonyl-CoA. This Chlorobium limicola (strain DSM 245 / NBRC 103803 / 6330) protein is Acetyl-coenzyme A carboxylase carboxyl transferase subunit alpha.